Consider the following 204-residue polypeptide: Ancillary SecYEG translocon subunit (204 aa).

The Cytoplasmic portion of the chain corresponds to 1–23 (MAYTIEEEQELTAIKAWWNENYK). A helical transmembrane segment spans residues 24-44 (FIIVCFVIAFGGVFGWNYWQS). The Periplasmic portion of the chain corresponds to 45–204 (HQIQKMHKAS…QLIQVRLNNL (160 aa)).

It belongs to the YfgM family. In terms of assembly, interacts with the SecYEG translocon. Forms a complex with PpiD.

It is found in the cell inner membrane. Functionally, may mediate protein transfer from the SecYEG translocon to the periplasmic chaperone network via its periplasmic C-terminal region. The protein is Ancillary SecYEG translocon subunit (1057) of Aggregatibacter actinomycetemcomitans (Actinobacillus actinomycetemcomitans).